The sequence spans 689 residues: DNA ligase (689 aa).

NAD(+)-binding positions include 40 to 44, 89 to 90, and Glu121; these read DAEYD and SL. Catalysis depends on Lys123, which acts as the N6-AMP-lysine intermediate. 4 residues coordinate NAD(+): Arg144, Glu179, Lys295, and Lys319. Zn(2+) is bound by residues Cys413, Cys416, Cys431, and Cys437. A BRCT domain is found at 610-689; it reads RAQSSLTGKI…EEWLTLIKNA (80 aa).

It belongs to the NAD-dependent DNA ligase family. LigA subfamily. Mg(2+) is required as a cofactor. Requires Mn(2+) as cofactor.

The enzyme catalyses NAD(+) + (deoxyribonucleotide)n-3'-hydroxyl + 5'-phospho-(deoxyribonucleotide)m = (deoxyribonucleotide)n+m + AMP + beta-nicotinamide D-nucleotide.. Functionally, DNA ligase that catalyzes the formation of phosphodiester linkages between 5'-phosphoryl and 3'-hydroxyl groups in double-stranded DNA using NAD as a coenzyme and as the energy source for the reaction. It is essential for DNA replication and repair of damaged DNA. The protein is DNA ligase of Rickettsia akari (strain Hartford).